A 290-amino-acid chain; its full sequence is Probable branched-chain-amino-acid aminotransferase (290 aa).

The residue at position 155 (K155) is an N6-(pyridoxal phosphate)lysine.

Belongs to the class-IV pyridoxal-phosphate-dependent aminotransferase family. It depends on pyridoxal 5'-phosphate as a cofactor.

It catalyses the reaction L-leucine + 2-oxoglutarate = 4-methyl-2-oxopentanoate + L-glutamate. The catalysed reaction is L-isoleucine + 2-oxoglutarate = (S)-3-methyl-2-oxopentanoate + L-glutamate. The enzyme catalyses L-valine + 2-oxoglutarate = 3-methyl-2-oxobutanoate + L-glutamate. It functions in the pathway amino-acid biosynthesis; L-isoleucine biosynthesis; L-isoleucine from 2-oxobutanoate: step 4/4. The protein operates within amino-acid biosynthesis; L-leucine biosynthesis; L-leucine from 3-methyl-2-oxobutanoate: step 4/4. It participates in amino-acid biosynthesis; L-valine biosynthesis; L-valine from pyruvate: step 4/4. Its function is as follows. Acts on leucine, isoleucine and valine. The chain is Probable branched-chain-amino-acid aminotransferase (ilvE) from Rickettsia conorii (strain ATCC VR-613 / Malish 7).